The following is a 269-amino-acid chain: Shikimate dehydrogenase (NADP(+)) (269 aa).

Residues 17–19 and threonine 64 contribute to the shikimate site; that span reads SKS. Lysine 68 functions as the Proton acceptor in the catalytic mechanism. Residue glutamate 80 participates in NADP(+) binding. The shikimate site is built by asparagine 89 and aspartate 105. Residues 130-134, 154-159, and methionine 213 contribute to the NADP(+) site; these read GAGGA and NRTHAK. Tyrosine 215 is a binding site for shikimate. NADP(+) is bound at residue glycine 237.

The protein belongs to the shikimate dehydrogenase family. Homodimer.

The enzyme catalyses shikimate + NADP(+) = 3-dehydroshikimate + NADPH + H(+). The protein operates within metabolic intermediate biosynthesis; chorismate biosynthesis; chorismate from D-erythrose 4-phosphate and phosphoenolpyruvate: step 4/7. In terms of biological role, involved in the biosynthesis of the chorismate, which leads to the biosynthesis of aromatic amino acids. Catalyzes the reversible NADPH linked reduction of 3-dehydroshikimate (DHSA) to yield shikimate (SA). The chain is Shikimate dehydrogenase (NADP(+)) from Neisseria cinerea.